The chain runs to 65 residues: MNAPLERPANSVDPKLLEILVCPMTKGPLEYDAARQELISRSAKLAYPIRDGIPIMLPEEARKID.

The protein belongs to the UPF0434 family.

The polypeptide is UPF0434 protein BRADO0313 (Bradyrhizobium sp. (strain ORS 278)).